The primary structure comprises 758 residues: 52 kDa repressor of the inhibitor of the protein kinase (758 aa).

A THAP-type zinc finger spans residues 1–86 (MPNFCAAPNC…LRDNAIPTIF (86 aa)). Positions 116–141 (QKKIEETSEQEQETNTNAQNPSAEAV) are disordered. Ser-563 is modified (phosphoserine).

In terms of assembly, interacts with DNAJC3, probably sequestring it.

In terms of biological role, upstream regulator of interferon-induced serine/threonine protein kinase R (PKR). May block the PKR-inhibitory function of DNAJC3, resulting in restoration of kinase activity and suppression of cell growth. In Mus musculus (Mouse), this protein is 52 kDa repressor of the inhibitor of the protein kinase.